The primary structure comprises 76 residues: RNA-binding protein KhpA (76 aa).

Residues S29–E76 form the KH domain.

Belongs to the KhpA RNA-binding protein family. In terms of assembly, forms a complex with KhpB.

It localises to the cytoplasm. In terms of biological role, a probable RNA chaperone. Forms a complex with KhpB which binds to cellular RNA and controls its expression. Plays a role in peptidoglycan (PG) homeostasis and cell length regulation. This chain is RNA-binding protein KhpA, found in Listeria innocua serovar 6a (strain ATCC BAA-680 / CLIP 11262).